We begin with the raw amino-acid sequence, 196 residues long: Probable malonic semialdehyde reductase RutE (196 aa).

This sequence belongs to the nitroreductase family. HadB/RutE subfamily. It depends on FMN as a cofactor.

It catalyses the reaction 3-hydroxypropanoate + NADP(+) = 3-oxopropanoate + NADPH + H(+). In terms of biological role, may reduce toxic product malonic semialdehyde to 3-hydroxypropionic acid, which is excreted. The polypeptide is Probable malonic semialdehyde reductase RutE (Escherichia coli O81 (strain ED1a)).